Consider the following 500-residue polypeptide: 5-taurinomethyluridine-[tRNA] synthase subunit GTPB3, mitochondrial (500 aa).

The N-terminal 73 residues, M1–P73, are a transit peptide targeting the mitochondrion. 3 residues coordinate 5,10-methylenetetrahydrofolate: R53, E111, and K151. The 175-residue stretch at G248–K422 folds into the TrmE-type G domain. GTP is bound by residues G255–S262, G281–D285, D302–G305, and N373–D376. Residue N258 participates in K(+) binding. Residues S262 and T283 each coordinate Mg(2+). Position 500 (K500) interacts with 5,10-methylenetetrahydrofolate.

Belongs to the TRAFAC class TrmE-Era-EngA-EngB-Septin-like GTPase superfamily. TrmE GTPase family. K(+) serves as cofactor.

It is found in the mitochondrion. It catalyses the reaction GTP + H2O = GDP + phosphate + H(+). In terms of biological role, GTPase component of the GTPBP3-MTO1 complex that catalyzes the 5-taurinomethyluridine (taum(5)U) modification at the 34th wobble position (U34) of mitochondrial tRNAs (mt-tRNAs), which plays a role in mt-tRNA decoding and mitochondrial translation. Taum(5)U formation on mammalian mt-tRNA requires the presence of both GTPBP3-mediated GTPase activity and MTO1 catalytic activity. This chain is 5-taurinomethyluridine-[tRNA] synthase subunit GTPB3, mitochondrial (gtpbp3), found in Danio rerio (Zebrafish).